The primary structure comprises 475 residues: NAD-dependent histone deacetylase sir2 (475 aa).

Polar residues predominate over residues 1 to 12 (MASNPLDNNMPT). A disordered region spans residues 1–35 (MASNPLDNNMPTTPVEEKIPVASYSPSSSGSSSGA). The segment covering 20–35 (PVASYSPSSSGSSSGA) has biased composition (low complexity). At serine 55 the chain carries Phosphoserine. Residues 139-436 (KLPHFNTFED…AGWLNELQAL (298 aa)) form the Deacetylase sirtuin-type domain. Residues 164-183 (GAGISTSLGILDFRSDNGFY) and 246-249 (QNID) each bind NAD(+). Catalysis depends on histidine 266, which acts as the Proton acceptor. Residues cysteine 274, cysteine 277, cysteine 298, and cysteine 301 each contribute to the Zn(2+) site. Residues 373–375 (GTS), 398–400 (SRT), and cysteine 416 contribute to the NAD(+) site.

Belongs to the sirtuin family. Class I subfamily. Zn(2+) serves as cofactor.

It is found in the nucleus. The protein resides in the chromosome. Its subcellular location is the centromere. The protein localises to the telomere. It carries out the reaction N(6)-acetyl-L-lysyl-[protein] + NAD(+) + H2O = 2''-O-acetyl-ADP-D-ribose + nicotinamide + L-lysyl-[protein]. Functionally, involved in silencing within the mating-type region, at the telomeres, and according to PubMed:12867036 also within centromeric DNA regions. Required for the localization of swi6 to the telomeres, silent mating type region, and according to PubMed:12867036 to the centromeric DNA regions. According to PubMed:15545655 not required for the localization of swi6 to centromeric foci. Deacetylates histone H3 on 'Lys-9' and 'Lys-16' of histone H4. This has a direct role in heterochromatin assembly. The chain is NAD-dependent histone deacetylase sir2 (sir2) from Schizosaccharomyces pombe (strain 972 / ATCC 24843) (Fission yeast).